A 341-amino-acid polypeptide reads, in one-letter code: MSSTAMVSGDDSLEPTLQSLLDQKTLRWVFVGGKGGVGKTTTSCSLAIQLAKVRKSVLLISTDPAHNLSDAFGQKFGKEARLVDGFDNLSAMEIDPNGSIQDLLSTGGDQADDPMAGLGLGGMMQDLAFSIPGVDEAMSFAEVLKQVKSLSYEVIVFDTAPTGHTLRFLQFPTVLEKALAKLSQLSSQFGPMLNSILGARGGLPGGQNLDEILSKMESLRETIGEVNAQFKDADLTTFVCVCIAEFLSLYETERMIQELTSYQIDTHCIVVNQLLFPGKDSSCEQCKARRKMQKKYLNEIEDLYEDFNVVRMPMLVEEVRGKEKLEKFSDMLVNPYVPPEE.

Residue 34–41 (KGGVGKTT) participates in ATP binding. D63 is an active-site residue. Positions 245 and 272 each coordinate ATP. 2 residues coordinate Zn(2+): C283 and C286.

Belongs to the arsA ATPase family. In terms of assembly, homodimer.

It is found in the cytoplasm. The protein resides in the endoplasmic reticulum. In terms of biological role, ATPase required for the post-translational delivery of tail-anchored (TA) proteins to the endoplasmic reticulum. Recognizes and selectively binds the transmembrane domain of TA proteins in the cytosol. This complex then targets to the endoplasmic reticulum by membrane-bound receptors, where the tail-anchored protein is released for insertion. This process is regulated by ATP binding and hydrolysis. ATP binding drives the homodimer towards the closed dimer state, facilitating recognition of newly synthesized TA membrane proteins. ATP hydrolysis is required for insertion. Subsequently, the homodimer reverts towards the open dimer state, lowering its affinity for the membrane-bound receptor, and returning it to the cytosol to initiate a new round of targeting. The chain is ATPase GET3 from Ajellomyces capsulatus (strain G186AR / H82 / ATCC MYA-2454 / RMSCC 2432) (Darling's disease fungus).